The chain runs to 333 residues: MINRKLPLLDIHRHLDGNVRAQTILELGRQFNITLPADNVAALIPHVQVIDPEPNLMAFLQKLDWGVTVLGDYDACRRIAIENIEDAQAQGLDYVELRFSPYYMAQSQGLHPQGVVEAVIDGIKSATKGANVKANLIGILSRTYGVKVCQQELDALLAFKDDLVAVDLAGDEIGFPGELFVEHFKQVHDAYLAATIHAGEALGAPSIWQAINELGASRIGHGVKAIEDIELMNYLRDKRIGIESCLTSNIQTSTVNDLAQHPLKQFLDHGILACINTDDPAVEGIEIEHEYLVAAPQAGLSQADIEKAQANALEIAYLSYSDKKALLTMASTR.

Residues histidine 12 and histidine 14 each coordinate Zn(2+). 3 residues coordinate substrate: histidine 14, aspartate 16, and glycine 170. Histidine 197 contributes to the Zn(2+) binding site. Glutamate 200 functions as the Proton donor in the catalytic mechanism. Residue aspartate 278 coordinates Zn(2+). A substrate-binding site is contributed by aspartate 279.

This sequence belongs to the metallo-dependent hydrolases superfamily. Adenosine and AMP deaminases family. Adenosine deaminase subfamily. Zn(2+) serves as cofactor.

The enzyme catalyses adenosine + H2O + H(+) = inosine + NH4(+). The catalysed reaction is 2'-deoxyadenosine + H2O + H(+) = 2'-deoxyinosine + NH4(+). Functionally, catalyzes the hydrolytic deamination of adenosine and 2-deoxyadenosine. The protein is Adenosine deaminase of Pseudoalteromonas translucida (strain TAC 125).